We begin with the raw amino-acid sequence, 595 residues long: Inactive metallocarboxypeptidase ecm14 (595 aa).

An N-terminal signal peptide occupies residues 1 to 22 (MYRPDHVFVILCAVFFTGQVTA). A propeptide spanning residues 23 to 178 (VPAGTGITHP…MIYESQYPSR (156 aa)) is cleaved from the precursor. The Peptidase M14 domain occupies 206–527 (NYQPFPVILQ…NSVLVLGHFL (322 aa)). H270 and E273 together coordinate Zn(2+). Substrate contacts are provided by residues 270–273 (HARE), R328, and 345–346 (DR). A disulfide bridge links C339 with C362. N386 carries N-linked (GlcNAc...) asparagine glycosylation. Residue H402 participates in Zn(2+) binding. 403-404 (SY) serves as a coordination point for substrate.

Belongs to the peptidase M14 family. Requires Zn(2+) as cofactor.

The protein localises to the vacuole. It is found in the secreted. Its function is as follows. Inactive carboxypeptidase that may play a role in cell wall organization and biogenesis. The sequence is that of Inactive metallocarboxypeptidase ecm14 (ecm14) from Talaromyces marneffei (strain ATCC 18224 / CBS 334.59 / QM 7333) (Penicillium marneffei).